Reading from the N-terminus, the 72-residue chain is Translation initiation factor IF-1 2 (72 aa).

In terms of domain architecture, S1-like spans 1–72 (MSKDDVIEVE…TRGRIVYRYK (72 aa)).

Belongs to the IF-1 family. Component of the 30S ribosomal translation pre-initiation complex which assembles on the 30S ribosome in the order IF-2 and IF-3, IF-1 and N-formylmethionyl-tRNA(fMet); mRNA recruitment can occur at any time during PIC assembly.

It localises to the cytoplasm. Its function is as follows. One of the essential components for the initiation of protein synthesis. Stabilizes the binding of IF-2 and IF-3 on the 30S subunit to which N-formylmethionyl-tRNA(fMet) subsequently binds. Helps modulate mRNA selection, yielding the 30S pre-initiation complex (PIC). Upon addition of the 50S ribosomal subunit IF-1, IF-2 and IF-3 are released leaving the mature 70S translation initiation complex. The sequence is that of Translation initiation factor IF-1 2 from Symbiobacterium thermophilum (strain DSM 24528 / JCM 14929 / IAM 14863 / T).